The primary structure comprises 309 residues: tRNA pseudouridine synthase B (309 aa).

Aspartate 39 serves as the catalytic Nucleophile. In terms of domain architecture, PUA spans 229 to 306; that stretch reads LPRVVVHQES…ERVLTLRKVF (78 aa).

This sequence belongs to the pseudouridine synthase TruB family. Type 1 subfamily.

The catalysed reaction is uridine(55) in tRNA = pseudouridine(55) in tRNA. In terms of biological role, responsible for synthesis of pseudouridine from uracil-55 in the psi GC loop of transfer RNAs. The chain is tRNA pseudouridine synthase B from Thermotoga maritima (strain ATCC 43589 / DSM 3109 / JCM 10099 / NBRC 100826 / MSB8).